Consider the following 297-residue polypeptide: Protein phosphatase PTC7 homolog (297 aa).

Residues 1-27 (MFSVLSCGRLVARAVFGGLSQTDSRDY) constitute a mitochondrion transit peptide. Positions 28-292 (SLVTASCGFG…DDITVLLSIV (265 aa)) constitute a PPM-type phosphatase domain. 3 residues coordinate Mn(2+): aspartate 71, glycine 72, and aspartate 216.

This sequence belongs to the PP2C family. Mg(2+) is required as a cofactor. It depends on Mn(2+) as a cofactor.

It localises to the mitochondrion matrix. It carries out the reaction O-phospho-L-seryl-[protein] + H2O = L-seryl-[protein] + phosphate. The catalysed reaction is O-phospho-L-threonyl-[protein] + H2O = L-threonyl-[protein] + phosphate. Protein phosphatase which positively regulates biosynthesis of the ubiquinone, coenzyme Q. Dephosphorylates the ubiquinone biosynthesis protein coq7 which is likely to lead to its activation. This is Protein phosphatase PTC7 homolog (pptc7) from Xenopus laevis (African clawed frog).